Here is a 332-residue protein sequence, read N- to C-terminus: L-lactate dehydrogenase A chain (332 aa).

NAD(+) is bound by residues 29–57 and R99; that span reads GAVG…VEDK. Substrate-binding residues include R106, N138, and R169. Residue N138 coordinates NAD(+). The Proton acceptor role is filled by H193. A substrate-binding site is contributed by T248.

This sequence belongs to the LDH/MDH superfamily. LDH family. As to quaternary structure, homotetramer.

It is found in the cytoplasm. The catalysed reaction is (S)-lactate + NAD(+) = pyruvate + NADH + H(+). It participates in fermentation; pyruvate fermentation to lactate; (S)-lactate from pyruvate: step 1/1. Its function is as follows. Interconverts simultaneously and stereospecifically pyruvate and lactate with concomitant interconversion of NADH and NAD(+). In Alligator mississippiensis (American alligator), this protein is L-lactate dehydrogenase A chain (LDHA).